The following is a 330-amino-acid chain: tRNA U34 carboxymethyltransferase (330 aa).

Carboxy-S-adenosyl-L-methionine-binding positions include lysine 91, tryptophan 105, lysine 110, glycine 130, 152–154, 181–182, methionine 196, tyrosine 200, and arginine 315; these read DPS and IE.

It belongs to the class I-like SAM-binding methyltransferase superfamily. CmoB family. In terms of assembly, homotetramer.

It catalyses the reaction carboxy-S-adenosyl-L-methionine + 5-hydroxyuridine(34) in tRNA = 5-carboxymethoxyuridine(34) in tRNA + S-adenosyl-L-homocysteine + H(+). Its function is as follows. Catalyzes carboxymethyl transfer from carboxy-S-adenosyl-L-methionine (Cx-SAM) to 5-hydroxyuridine (ho5U) to form 5-carboxymethoxyuridine (cmo5U) at position 34 in tRNAs. The sequence is that of tRNA U34 carboxymethyltransferase from Shewanella sp. (strain ANA-3).